The sequence spans 317 residues: Apolipoprotein E (317 aa).

The N-terminal stretch at 1 to 18 (MKVLWAALLVTFLAGCQA) is a signal peptide. 8 consecutive repeat copies span residues 80–101 (ALMD…EQLT), 102–123 (PVAE…ARLG), 124–145 (ADME…AMLG), 146–167 (QSTE…KRLL), 168–189 (RDAD…EGAE), 190–211 (RGVS…VRAA), 212–233 (TVGS…ERLR), and 234–255 (ARME…EQVA). Residues 80–255 (ALMDETMKEL…RLDEVKEQVA (176 aa)) form an 8 X 22 AA approximate tandem repeats region. Met-143 is modified (methionine sulfoxide). At Ser-147 the chain carries Phosphoserine. The segment at 158 to 168 (HLRKLRKRLLR) is LDL and other lipoprotein receptors binding. 162–165 (LRKR) is a heparin binding site. Positions 210–290 (AATVGSLAGQ…SWFEPLVEDM (81 aa)) are lipid-binding and lipoprotein association. Heparin is bound at residue 229 to 236 (GERLRARM). The segment at 266-317 (QQIRLQAEAFQARLKSWFEPLVEDMQRQWAGLVEKVQAAVGTSAAPVPSDNH) is homooligomerization. The segment at 278-290 (RLKSWFEPLVEDM) is specificity for association with VLDL.

The protein belongs to the apolipoprotein A1/A4/E family. Homotetramer. May interact with ABCA1; functionally associated with ABCA1 in the biogenesis of HDLs. May interact with APP/A4 amyloid-beta peptide; the interaction is extremely stable in vitro but its physiological significance is unclear. May interact with MAPT. May interact with MAP2. In the cerebrospinal fluid, interacts with secreted SORL1. Interacts with PMEL; this allows the loading of PMEL luminal fragment on ILVs to induce fibril nucleation. In terms of processing, APOE exists as multiple glycosylated and sialylated glycoforms within cells and in plasma. The extent of glycosylation and sialylation are tissue and context specific. Glycated in plasma VLDL. Post-translationally, phosphorylated by FAM20C in the extracellular medium.

It is found in the secreted. Its subcellular location is the extracellular space. The protein localises to the extracellular matrix. The protein resides in the extracellular vesicle. It localises to the endosome. It is found in the multivesicular body. Its function is as follows. APOE is an apolipoprotein, a protein associating with lipid particles, that mainly functions in lipoprotein-mediated lipid transport between organs via the plasma and interstitial fluids. APOE is a core component of plasma lipoproteins and is involved in their production, conversion and clearance. Apolipoproteins are amphipathic molecules that interact both with lipids of the lipoprotein particle core and the aqueous environment of the plasma. As such, APOE associates with chylomicrons, chylomicron remnants, very low density lipoproteins (VLDL) and intermediate density lipoproteins (IDL) but shows a preferential binding to high-density lipoproteins (HDL). It also binds a wide range of cellular receptors including the LDL receptor/LDLR, the LDL receptor-related proteins LRP1, LRP2 and LRP8 and the very low-density lipoprotein receptor/VLDLR that mediate the cellular uptake of the APOE-containing lipoprotein particles. Finally, APOE also has a heparin-binding activity and binds heparan-sulfate proteoglycans on the surface of cells, a property that supports the capture and the receptor-mediated uptake of APOE-containing lipoproteins by cells. A main function of APOE is to mediate lipoprotein clearance through the uptake of chylomicrons, VLDLs, and HDLs by hepatocytes. APOE is also involved in the biosynthesis by the liver of VLDLs as well as their uptake by peripheral tissues ensuring the delivery of triglycerides and energy storage in muscle, heart and adipose tissues. By participating in the lipoprotein-mediated distribution of lipids among tissues, APOE plays a critical role in plasma and tissues lipid homeostasis. APOE is also involved in two steps of reverse cholesterol transport, the HDLs-mediated transport of cholesterol from peripheral tissues to the liver, and thereby plays an important role in cholesterol homeostasis. First, it is functionally associated with ABCA1 in the biogenesis of HDLs in tissues. Second, it is enriched in circulating HDLs and mediates their uptake by hepatocytes. APOE also plays an important role in lipid transport in the central nervous system, regulating neuron survival and sprouting. This is Apolipoprotein E (APOE) from Hylobates lar (Lar gibbon).